The following is a 260-amino-acid chain: Ribonuclease HII (260 aa).

Residues 73-260 (LHIAGIDEAG…APVQQQLDIV (188 aa)) enclose the RNase H type-2 domain. Residues Asp-79, Glu-80, and Asp-171 each coordinate a divalent metal cation.

It belongs to the RNase HII family. Mn(2+) serves as cofactor. It depends on Mg(2+) as a cofactor.

It is found in the cytoplasm. It carries out the reaction Endonucleolytic cleavage to 5'-phosphomonoester.. Endonuclease that specifically degrades the RNA of RNA-DNA hybrids. The sequence is that of Ribonuclease HII from Desulfitobacterium hafniense (strain Y51).